Reading from the N-terminus, the 249-residue chain is 2,3-bisphosphoglycerate-dependent phosphoglycerate mutase (249 aa).

Residues 8–15 (RHGESAWN), 21–22 (TG), arginine 60, 87–90 (ERHY), lysine 98, 114–115 (RR), and 183–184 (GN) each bind substrate. The Tele-phosphohistidine intermediate role is filled by histidine 9. Glutamate 87 functions as the Proton donor/acceptor in the catalytic mechanism.

It belongs to the phosphoglycerate mutase family. BPG-dependent PGAM subfamily.

It carries out the reaction (2R)-2-phosphoglycerate = (2R)-3-phosphoglycerate. The protein operates within carbohydrate degradation; glycolysis; pyruvate from D-glyceraldehyde 3-phosphate: step 3/5. In terms of biological role, catalyzes the interconversion of 2-phosphoglycerate and 3-phosphoglycerate. This chain is 2,3-bisphosphoglycerate-dependent phosphoglycerate mutase, found in Methanosphaerula palustris (strain ATCC BAA-1556 / DSM 19958 / E1-9c).